We begin with the raw amino-acid sequence, 105 residues long: uncharacterized protein (105 aa).

Residues 1–27 (MQSPAMKRIKSSSHSRWDGSGSVNEMP) form a disordered region.

The protein resides in the mitochondrion. This is an uncharacterized protein from Arabidopsis thaliana (Mouse-ear cress).